A 310-amino-acid chain; its full sequence is Putative olfactory receptor 7A2 (310 aa).

Over Met-1–Pro-26 the chain is Extracellular. The N-linked (GlcNAc...) asparagine glycan is linked to Asn-6. The helical transmembrane segment at Phe-27–Ile-47 threads the bilayer. Over Leu-48–Cys-55 the chain is Cytoplasmic. A helical transmembrane segment spans residues Leu-56–Ser-76. The Extracellular portion of the chain corresponds to Thr-77–Thr-100. Cys-98 and Cys-190 are joined by a disulfide. Residues Gln-101–Tyr-121 traverse the membrane as a helical segment. The Cytoplasmic portion of the chain corresponds to Asp-122–Gln-140. The chain crosses the membrane as a helical span at residues Leu-141–Ser-161. The Extracellular segment spans residues Leu-162–Met-198. A helical membrane pass occupies residues Val-199–Ser-218. The Cytoplasmic portion of the chain corresponds to Tyr-219 to Ala-238. A helical membrane pass occupies residues Leu-239 to Val-259. Topologically, residues Tyr-260–Thr-272 are extracellular. The chain crosses the membrane as a helical span at residues Ala-273–Leu-293. Over Arg-294 to Gln-310 the chain is Cytoplasmic.

The protein belongs to the G-protein coupled receptor 1 family.

The protein localises to the cell membrane. Odorant receptor. The chain is Putative olfactory receptor 7A2 (OR7A2P) from Homo sapiens (Human).